We begin with the raw amino-acid sequence, 1613 residues long: NAD-specific glutamate dehydrogenase (1613 aa).

Residue lysine 849 is part of the active site.

Belongs to the Glu/Leu/Phe/Val dehydrogenases family.

It carries out the reaction L-glutamate + NAD(+) + H2O = 2-oxoglutarate + NH4(+) + NADH + H(+). Functionally, involved in arginine catabolism by converting L-glutamate, into 2-oxoglutarate, which is then channeled into the tricarboxylic acid cycle. In Halomonas elongata (strain ATCC 33173 / DSM 2581 / NBRC 15536 / NCIMB 2198 / 1H9), this protein is NAD-specific glutamate dehydrogenase.